Consider the following 345-residue polypeptide: Tetraacyldisaccharide 4'-kinase (345 aa).

61–68 lines the ATP pocket; that stretch reads TAGGTGKT.

Belongs to the LpxK family.

The enzyme catalyses a lipid A disaccharide + ATP = a lipid IVA + ADP + H(+). It functions in the pathway glycolipid biosynthesis; lipid IV(A) biosynthesis; lipid IV(A) from (3R)-3-hydroxytetradecanoyl-[acyl-carrier-protein] and UDP-N-acetyl-alpha-D-glucosamine: step 6/6. Functionally, transfers the gamma-phosphate of ATP to the 4'-position of a tetraacyldisaccharide 1-phosphate intermediate (termed DS-1-P) to form tetraacyldisaccharide 1,4'-bis-phosphate (lipid IVA). In Xanthomonas euvesicatoria pv. vesicatoria (strain 85-10) (Xanthomonas campestris pv. vesicatoria), this protein is Tetraacyldisaccharide 4'-kinase.